A 115-amino-acid polypeptide reads, in one-letter code: Large ribosomal subunit protein uL22c (115 aa).

It belongs to the universal ribosomal protein uL22 family. As to quaternary structure, part of the 50S ribosomal subunit.

It localises to the plastid. Its subcellular location is the chloroplast. This protein binds specifically to 23S rRNA. Its function is as follows. The globular domain of the protein is located near the polypeptide exit tunnel on the outside of the subunit, while an extended beta-hairpin is found that lines the wall of the exit tunnel in the center of the 70S ribosome. The polypeptide is Large ribosomal subunit protein uL22c (rpl22) (Thalassiosira pseudonana (Marine diatom)).